A 1004-amino-acid polypeptide reads, in one-letter code: 2-oxoglutarate dehydrogenase E1 component (1004 aa).

Belongs to the alpha-ketoglutarate dehydrogenase family. In terms of assembly, homodimer. Part of the 2-oxoglutarate dehydrogenase (OGDH) complex composed of E1 (2-oxoglutarate dehydrogenase), E2 (dihydrolipoamide succinyltransferase) and E3 (dihydrolipoamide dehydrogenase); the complex contains multiple copies of the three enzymatic components (E1, E2 and E3). Thiamine diphosphate serves as cofactor.

The catalysed reaction is N(6)-[(R)-lipoyl]-L-lysyl-[protein] + 2-oxoglutarate + H(+) = N(6)-[(R)-S(8)-succinyldihydrolipoyl]-L-lysyl-[protein] + CO2. Its function is as follows. E1 component of the 2-oxoglutarate dehydrogenase (OGDH) complex which catalyzes the decarboxylation of 2-oxoglutarate, the first step in the conversion of 2-oxoglutarate to succinyl-CoA and CO(2). In Brucella suis (strain ATCC 23445 / NCTC 10510), this protein is 2-oxoglutarate dehydrogenase E1 component.